The chain runs to 86 residues: RNA-binding protein Hfq (86 aa).

Residues 9-69 (DRFLNILRTS…VSTIMPESFV (61 aa)) form the Sm domain.

The protein belongs to the Hfq family. In terms of assembly, homohexamer.

Functionally, RNA chaperone that binds small regulatory RNA (sRNAs) and mRNAs to facilitate mRNA translational regulation in response to envelope stress, environmental stress and changes in metabolite concentrations. Also binds with high specificity to tRNAs. This chain is RNA-binding protein Hfq, found in Thermosipho melanesiensis (strain DSM 12029 / CIP 104789 / BI429).